The following is a 370-amino-acid chain: Peptidoglycan glycosyltransferase MrdB (370 aa).

A run of 9 helical transmembrane segments spans residues 20–40, 50–70, 75–95, 136–156, 160–180, 183–203, 263–283, 312–332, and 336–356; these read MLLILLALLVYSALVIWSASG, IGQIAMGLVIMVVMAQIPPRV, APYLYIICIILLVAVDAFGAI, SLKNTGIALVLIFMPTLLVAA, LGTSILVALSGLFVLFLSGLS, LIGVAVVLVAAFIPILWFFLM, FIFAVLAEELGLVGILILLAL, LILFVYVFVNIGMVSGILPVV, and LPLVSYGGSALIVLMAGFGIV.

The protein belongs to the SEDS family. MrdB/RodA subfamily.

It localises to the cell inner membrane. It catalyses the reaction [GlcNAc-(1-&gt;4)-Mur2Ac(oyl-L-Ala-gamma-D-Glu-L-Lys-D-Ala-D-Ala)](n)-di-trans,octa-cis-undecaprenyl diphosphate + beta-D-GlcNAc-(1-&gt;4)-Mur2Ac(oyl-L-Ala-gamma-D-Glu-L-Lys-D-Ala-D-Ala)-di-trans,octa-cis-undecaprenyl diphosphate = [GlcNAc-(1-&gt;4)-Mur2Ac(oyl-L-Ala-gamma-D-Glu-L-Lys-D-Ala-D-Ala)](n+1)-di-trans,octa-cis-undecaprenyl diphosphate + di-trans,octa-cis-undecaprenyl diphosphate + H(+). The protein operates within cell wall biogenesis; peptidoglycan biosynthesis. Peptidoglycan polymerase that is essential for cell wall elongation. The polypeptide is Peptidoglycan glycosyltransferase MrdB (Escherichia coli O157:H7).